The following is a 76-amino-acid chain: uncharacterized protein (76 aa).

This is an uncharacterized protein from Treponema pallidum (strain Nichols).